Consider the following 329-residue polypeptide: Glycerol-3-phosphate dehydrogenase [NAD(P)+] (329 aa).

The NADPH site is built by Ser-10, Trp-11, Arg-31, and Lys-105. The sn-glycerol 3-phosphate site is built by Lys-105, Gly-134, and Ser-136. Ala-138 contacts NADPH. Sn-glycerol 3-phosphate is bound by residues Lys-189, Asp-242, Ser-252, Arg-253, and Asn-254. Lys-189 functions as the Proton acceptor in the catalytic mechanism. Arg-253 provides a ligand contact to NADPH. Positions 277 and 279 each coordinate NADPH.

This sequence belongs to the NAD-dependent glycerol-3-phosphate dehydrogenase family.

Its subcellular location is the cytoplasm. The enzyme catalyses sn-glycerol 3-phosphate + NAD(+) = dihydroxyacetone phosphate + NADH + H(+). The catalysed reaction is sn-glycerol 3-phosphate + NADP(+) = dihydroxyacetone phosphate + NADPH + H(+). It functions in the pathway membrane lipid metabolism; glycerophospholipid metabolism. In terms of biological role, catalyzes the reduction of the glycolytic intermediate dihydroxyacetone phosphate (DHAP) to sn-glycerol 3-phosphate (G3P), the key precursor for phospholipid synthesis. The protein is Glycerol-3-phosphate dehydrogenase [NAD(P)+] of Neisseria meningitidis serogroup A / serotype 4A (strain DSM 15465 / Z2491).